The sequence spans 291 residues: Ribosomal RNA small subunit methyltransferase A (291 aa).

Residues histidine 37, leucine 39, glycine 64, glutamate 85, aspartate 110, and asparagine 131 each coordinate S-adenosyl-L-methionine.

Belongs to the class I-like SAM-binding methyltransferase superfamily. rRNA adenine N(6)-methyltransferase family. RsmA subfamily.

The protein resides in the cytoplasm. The catalysed reaction is adenosine(1518)/adenosine(1519) in 16S rRNA + 4 S-adenosyl-L-methionine = N(6)-dimethyladenosine(1518)/N(6)-dimethyladenosine(1519) in 16S rRNA + 4 S-adenosyl-L-homocysteine + 4 H(+). In terms of biological role, specifically dimethylates two adjacent adenosines (A1518 and A1519) in the loop of a conserved hairpin near the 3'-end of 16S rRNA in the 30S particle. May play a critical role in biogenesis of 30S subunits. The chain is Ribosomal RNA small subunit methyltransferase A from Dehalococcoides mccartyi (strain ATCC BAA-2100 / JCM 16839 / KCTC 5957 / BAV1).